A 49-amino-acid polypeptide reads, in one-letter code: Lysozyme C (49 aa).

The region spanning 1 to 49 (SKMKKCEFAKIAKEQHMDGYHGVSLADWVCLVNNESDFNTKAINRNKGI) is the C-type lysozyme domain. Glu-35 is an active-site residue.

Belongs to the glycosyl hydrolase 22 family. Monomer.

It is found in the secreted. The catalysed reaction is Hydrolysis of (1-&gt;4)-beta-linkages between N-acetylmuramic acid and N-acetyl-D-glucosamine residues in a peptidoglycan and between N-acetyl-D-glucosamine residues in chitodextrins.. Its function is as follows. Lysozymes have primarily a bacteriolytic function; those in tissues and body fluids are associated with the monocyte-macrophage system and enhance the activity of immunoagents. The chain is Lysozyme C (LYZ) from Pseudocheirus peregrinus (Common ring-tailed possum).